Consider the following 100-residue polypeptide: MTPPPTQPGDRRGGLLGTLAVVGVALLPIICCAGPVLLASGALAGLGGVLVSPWLLAPAAVLLAGALTWWLRRRRTGNGDACCLPAPRTDQHDRDLLRKQ.

The next 2 membrane-spanning stretches (helical) occupy residues 19-39 and 43-63; these read LAVV…VLLA and LAGL…AVLL. Cysteine 31 and cysteine 32 together coordinate Hg(2+). The Hg(2+) site is built by cysteine 82 and cysteine 83.

Its subcellular location is the cell membrane. Functionally, involved in mercuric transport. Passes a mercury ion from the MerP protein to the mercuric reductase MerA. The sequence is that of Mercuric transport protein (merT) from Streptomyces lividans.